The chain runs to 408 residues: S-adenosylmethionine synthase (408 aa).

Residue His15 participates in ATP binding. Asp17 contributes to the Mg(2+) binding site. A K(+)-binding site is contributed by Glu43. L-methionine contacts are provided by Glu56 and Gln100. The flexible loop stretch occupies residues 100–110 (QSPDIAQGVNE). ATP contacts are provided by residues 171-173 (DGK), 248-249 (KF), Asp257, 263-264 (RK), Ala280, and Lys284. Residue Asp257 coordinates L-methionine. L-methionine is bound at residue Lys288.

This sequence belongs to the AdoMet synthase family. As to quaternary structure, homotetramer; dimer of dimers. The cofactor is Mg(2+). It depends on K(+) as a cofactor.

The protein localises to the cytoplasm. It catalyses the reaction L-methionine + ATP + H2O = S-adenosyl-L-methionine + phosphate + diphosphate. It functions in the pathway amino-acid biosynthesis; S-adenosyl-L-methionine biosynthesis; S-adenosyl-L-methionine from L-methionine: step 1/1. Its function is as follows. Catalyzes the formation of S-adenosylmethionine (AdoMet) from methionine and ATP. The overall synthetic reaction is composed of two sequential steps, AdoMet formation and the subsequent tripolyphosphate hydrolysis which occurs prior to release of AdoMet from the enzyme. In Synechococcus sp. (strain CC9902), this protein is S-adenosylmethionine synthase.